Here is a 98-residue protein sequence, read N- to C-terminus: MSRNELDERIETYYVRVRGVVQGVGFRHATVREAHALKLRGWVANLEDGTVEAMIQGSGAQIDRMLAWLRHGPPAARVTEVTFEERQTERRFERFQQQ.

The 87-residue stretch at 12–98 folds into the Acylphosphatase-like domain; sequence TYYVRVRGVV…ERRFERFQQQ (87 aa). Catalysis depends on residues Arg27 and Asn45.

This sequence belongs to the acylphosphatase family.

The enzyme catalyses an acyl phosphate + H2O = a carboxylate + phosphate + H(+). The chain is Acylphosphatase (acyP) from Burkholderia lata (strain ATCC 17760 / DSM 23089 / LMG 22485 / NCIMB 9086 / R18194 / 383).